A 363-amino-acid polypeptide reads, in one-letter code: NADH-quinone oxidoreductase subunit H (363 aa).

10 consecutive transmembrane segments (helical) span residues 29–49 (VLKILMIAIPLIVSVAFYVVW), 62–82 (GPMYVGMGLFQAFADVFKLLF), 94–114 (AIFVIAPLLTLAPSFAAWAVV), 127–147 (VGLLYLLAMTSLGVYGIILAG), 166–186 (VVSYEIAMGFALVGVMIAAGS), 202–222 (FFDWFLIPLFPLFIVYWVSGV), 239–257 (IVAGHMVEYSGSVFALFFL), 264–286 (ILVSFLISIFFLGGWLSPIQGWV), 293–313 (LIDWVWNGGWPWLLLKVLFFA), and 339–359 (FIPLTIVWIAVTALMVFSGVI).

The protein belongs to the complex I subunit 1 family. NDH-1 is composed of 14 different subunits. Subunits NuoA, H, J, K, L, M, N constitute the membrane sector of the complex.

The protein localises to the cell inner membrane. The catalysed reaction is a quinone + NADH + 5 H(+)(in) = a quinol + NAD(+) + 4 H(+)(out). NDH-1 shuttles electrons from NADH, via FMN and iron-sulfur (Fe-S) centers, to quinones in the respiratory chain. The immediate electron acceptor for the enzyme in this species is believed to be ubiquinone. Couples the redox reaction to proton translocation (for every two electrons transferred, four hydrogen ions are translocated across the cytoplasmic membrane), and thus conserves the redox energy in a proton gradient. This subunit may bind ubiquinone. The protein is NADH-quinone oxidoreductase subunit H of Xylella fastidiosa (strain Temecula1 / ATCC 700964).